A 59-amino-acid chain; its full sequence is Protein translocase subunit SecE (59 aa).

Residues 37 to 57 form a helical membrane-spanning segment; that stretch reads LIVLLFVGLLAFLVQLAFSIL.

Belongs to the SecE/SEC61-gamma family. Component of the Sec protein translocase complex. Heterotrimer consisting of SecY (alpha), SecG (beta) and SecE (gamma) subunits. The heterotrimers can form oligomers, although 1 heterotrimer is thought to be able to translocate proteins. Interacts with the ribosome. May interact with SecDF, and other proteins may be involved.

It is found in the cell membrane. Its function is as follows. Essential subunit of the Sec protein translocation channel SecYEG. Clamps together the 2 halves of SecY. May contact the channel plug during translocation. This is Protein translocase subunit SecE from Metallosphaera sedula (strain ATCC 51363 / DSM 5348 / JCM 9185 / NBRC 15509 / TH2).